Here is a 101-residue protein sequence, read N- to C-terminus: Large ribosomal subunit protein bL21 (101 aa).

The protein belongs to the bacterial ribosomal protein bL21 family. Part of the 50S ribosomal subunit. Contacts protein L20.

This protein binds to 23S rRNA in the presence of protein L20. The chain is Large ribosomal subunit protein bL21 from Corynebacterium efficiens (strain DSM 44549 / YS-314 / AJ 12310 / JCM 11189 / NBRC 100395).